Here is a 437-residue protein sequence, read N- to C-terminus: GTPase Obg (437 aa).

In terms of domain architecture, Obg spans 2–161 (SDFIDRALIT…RELQLELKVI (160 aa)). The OBG-type G domain occupies 162 to 335 (ADVGLVGFPN…LQRRIVDILR (174 aa)). GTP-binding positions include 168 to 175 (GFPNAGKS), 193 to 197 (FTTLS), 214 to 217 (DIPG), 284 to 287 (NKTD), and 316 to 318 (SAA). Mg(2+) is bound by residues Ser175 and Thr195. The 79-residue stretch at 355 to 433 (FSNIDPNDFW…IEKAELLWQD (79 aa)) folds into the OCT domain.

It belongs to the TRAFAC class OBG-HflX-like GTPase superfamily. OBG GTPase family. Monomer. The cofactor is Mg(2+).

It localises to the cytoplasm. Its function is as follows. An essential GTPase which binds GTP, GDP and possibly (p)ppGpp with moderate affinity, with high nucleotide exchange rates and a fairly low GTP hydrolysis rate. Plays a role in control of the cell cycle, stress response, ribosome biogenesis and in those bacteria that undergo differentiation, in morphogenesis control. The sequence is that of GTPase Obg from Herpetosiphon aurantiacus (strain ATCC 23779 / DSM 785 / 114-95).